Reading from the N-terminus, the 200-residue chain is NADH-quinone oxidoreductase subunit C (200 aa).

It belongs to the complex I 30 kDa subunit family. In terms of assembly, NDH-1 is composed of 14 different subunits. Subunits NuoB, C, D, E, F, and G constitute the peripheral sector of the complex.

Its subcellular location is the cell inner membrane. The enzyme catalyses a quinone + NADH + 5 H(+)(in) = a quinol + NAD(+) + 4 H(+)(out). Functionally, NDH-1 shuttles electrons from NADH, via FMN and iron-sulfur (Fe-S) centers, to quinones in the respiratory chain. The immediate electron acceptor for the enzyme in this species is believed to be ubiquinone. Couples the redox reaction to proton translocation (for every two electrons transferred, four hydrogen ions are translocated across the cytoplasmic membrane), and thus conserves the redox energy in a proton gradient. The protein is NADH-quinone oxidoreductase subunit C of Burkholderia multivorans (strain ATCC 17616 / 249).